Consider the following 486-residue polypeptide: Glycogen synthase (486 aa).

Position 15 (lysine 15) interacts with ADP-alpha-D-glucose.

This sequence belongs to the glycosyltransferase 1 family. Bacterial/plant glycogen synthase subfamily.

The catalysed reaction is [(1-&gt;4)-alpha-D-glucosyl](n) + ADP-alpha-D-glucose = [(1-&gt;4)-alpha-D-glucosyl](n+1) + ADP + H(+). It functions in the pathway glycan biosynthesis; glycogen biosynthesis. Synthesizes alpha-1,4-glucan chains using ADP-glucose. The sequence is that of Glycogen synthase from Thermotoga maritima (strain ATCC 43589 / DSM 3109 / JCM 10099 / NBRC 100826 / MSB8).